A 254-amino-acid polypeptide reads, in one-letter code: Pimeloyl-[acyl-carrier protein] methyl ester esterase (254 aa).

One can recognise an AB hydrolase-1 domain in the interval 14–242 (LVLLHGWGMN…ASHAPFISHP (229 aa)). Substrate-binding positions include W20, 82–83 (SL), and 143–147 (FLAIQ). S82 acts as the Nucleophile in catalysis. Residues D207 and H235 contribute to the active site. A substrate-binding site is contributed by H235.

This sequence belongs to the AB hydrolase superfamily. Carboxylesterase BioH family. Monomer.

The protein localises to the cytoplasm. The catalysed reaction is 6-carboxyhexanoyl-[ACP] methyl ester + H2O = 6-carboxyhexanoyl-[ACP] + methanol + H(+). It functions in the pathway cofactor biosynthesis; biotin biosynthesis. Functionally, the physiological role of BioH is to remove the methyl group introduced by BioC when the pimeloyl moiety is complete. It allows to synthesize pimeloyl-ACP via the fatty acid synthetic pathway through the hydrolysis of the ester bonds of pimeloyl-ACP esters. This is Pimeloyl-[acyl-carrier protein] methyl ester esterase from Aeromonas salmonicida (strain A449).